Here is a 198-residue protein sequence, read N- to C-terminus: Probable GTP-binding protein EngB (198 aa).

An EngB-type G domain is found at 22–196 (NLSEIAFVGR…WNWIKGQAEL (175 aa)). Residues 30–37 (GRSNVGKS), 57–61 (GKTQT), 75–78 (DVPG), 142–145 (TKAD), and 175–177 (FSA) each bind GTP. 2 residues coordinate Mg(2+): Ser37 and Thr59.

It belongs to the TRAFAC class TrmE-Era-EngA-EngB-Septin-like GTPase superfamily. EngB GTPase family. It depends on Mg(2+) as a cofactor.

Functionally, necessary for normal cell division and for the maintenance of normal septation. The sequence is that of Probable GTP-binding protein EngB from Oenococcus oeni (strain ATCC BAA-331 / PSU-1).